Reading from the N-terminus, the 641-residue chain is Raffinose carrier protein (641 aa).

The interval 1–506 (MQEEHNYKWV…GQVIPLAQVN (506 aa)) is permease. 12 consecutive transmembrane segments (helical) span residues 25–45 (AFYS…LFDT), 57–77 (LVTL…PFIG), 93–113 (WVVV…TNLG), 120–140 (AMIY…FYSF), 168–188 (LGST…VIFF), 201–221 (WFIF…GVGL), 253–273 (LLWA…LGSL), 288–308 (FSIL…LFPV), 317–337 (GVFA…TIAG), 342–362 (LVLL…LVVL), 394–414 (FGGA…GMTT), and 429–449 (FKLT…GIFS). In terms of domain architecture, PTS EIIA type-1 spans 507–611 (DPTFAAGTLG…DDTVIMTVTN (105 aa)). Histidine 559 carries the post-translational modification Phosphohistidine; by HPr.

The protein in the N-terminal section; belongs to the sodium:galactoside symporter (TC 2.A.2) family.

The protein localises to the cell membrane. The sequence is that of Raffinose carrier protein (rafP) from Pediococcus pentosaceus.